The sequence spans 130 residues: MSATQYYGTGRRKTSTARVFAKAGSGNIVVNQRPLDVYFGRETARMVVRQPLELVEMTDKLDIYVTVKGGGTTGQAGAIRHGITRALLQLDEALRPTLRSAGFVTRDARKVERKKVGLRKARRKPQFSKR.

This sequence belongs to the universal ribosomal protein uS9 family.

The sequence is that of Small ribosomal subunit protein uS9 from Shewanella denitrificans (strain OS217 / ATCC BAA-1090 / DSM 15013).